Here is a 317-residue protein sequence, read N- to C-terminus: Melanocyte-stimulating hormone receptor (317 aa).

Over 1–37 (MPVLGSQRRLLGSLNCTPPATFPLTLAPNRTGPQCLE) the chain is Extracellular. The N-linked (GlcNAc...) asparagine glycan is linked to Asn-29. Residues 38-63 (VAIPDGLFLSLGLVSLVENVLVVAAI) form a helical membrane-spanning segment. The Cytoplasmic segment spans residues 64-72 (AKNRNLQSP). Residues 73-93 (MYYFICCLAMSDLLVSVSNVL) traverse the membrane as a helical segment. Over 94 to 118 (ETAVMLLLEAGALAARAAVVQQLDN) the chain is Extracellular. A helical membrane pass occupies residues 119 to 140 (VIDVLICGSMVSSLCFLGAIAV). Residues 141–163 (DRYISIFYALRYHSVVTLPRAWR) lie on the Cytoplasmic side of the membrane. The chain crosses the membrane as a helical span at residues 164–183 (IIAAIWVASILTSLLFITYY). Residues 184 to 191 (NHTVVLLC) lie on the Extracellular side of the membrane. Residues 192 to 211 (LVGFFIAMLALMAVLYVHML) form a helical membrane-spanning segment. The Cytoplasmic segment spans residues 212 to 240 (ARACQHARGIARLQKRQRPIHQGFGLKGA). The helical transmembrane segment at 241–266 (ATLTILLGVFFLCWGPFFLHLSLIVL) threads the bilayer. Residues 267–279 (CPQHPTCGCIFKN) are Extracellular-facing. Residues 280-300 (FNLFLALIICNAIVDPLIYAF) form a helical membrane-spanning segment. The Cytoplasmic segment spans residues 301–317 (RSQELRKTLQEVLQCSW). The S-palmitoyl cysteine moiety is linked to residue Cys-315.

Belongs to the G-protein coupled receptor 1 family. As to quaternary structure, interacts with MGRN1, but does not undergo MGRN1-mediated ubiquitination; this interaction competes with GNAS-binding and thus inhibits agonist-induced cAMP production. Interacts with OPN3; the interaction results in a decrease in MC1R-mediated cAMP signaling and ultimately a decrease in melanin production in melanocytes.

The protein resides in the cell membrane. Its function is as follows. Receptor for MSH (alpha, beta and gamma) and ACTH. The activity of this receptor is mediated by G proteins which activate adenylate cyclase. Mediates melanogenesis, the production of eumelanin (black/brown) and phaeomelanin (red/yellow), via regulation of cAMP signaling in melanocytes. This Cervus elaphus (Red deer) protein is Melanocyte-stimulating hormone receptor (MC1R).